The primary structure comprises 319 residues: tRNA pseudouridine synthase B (319 aa).

D49 acts as the Nucleophile in catalysis.

This sequence belongs to the pseudouridine synthase TruB family. Type 1 subfamily.

It carries out the reaction uridine(55) in tRNA = pseudouridine(55) in tRNA. Its function is as follows. Responsible for synthesis of pseudouridine from uracil-55 in the psi GC loop of transfer RNAs. This chain is tRNA pseudouridine synthase B, found in Bartonella henselae (strain ATCC 49882 / DSM 28221 / CCUG 30454 / Houston 1) (Rochalimaea henselae).